The following is a 364-amino-acid chain: 3-isopropylmalate dehydrogenase (364 aa).

Residue 79-92 (GPKWNNINETSRPE) participates in NAD(+) binding. Positions 100, 110, 139, and 228 each coordinate substrate. Mg(2+) is bound by residues aspartate 228, aspartate 252, and aspartate 256. Residue 286 to 298 (GSAPDIAGKNIAN) coordinates NAD(+).

Belongs to the isocitrate and isopropylmalate dehydrogenases family. LeuB type 1 subfamily. In terms of assembly, homodimer. The cofactor is Mg(2+). Requires Mn(2+) as cofactor.

The protein resides in the cytoplasm. The catalysed reaction is (2R,3S)-3-isopropylmalate + NAD(+) = 4-methyl-2-oxopentanoate + CO2 + NADH. It functions in the pathway amino-acid biosynthesis; L-leucine biosynthesis; L-leucine from 3-methyl-2-oxobutanoate: step 3/4. Functionally, catalyzes the oxidation of 3-carboxy-2-hydroxy-4-methylpentanoate (3-isopropylmalate) to 3-carboxy-4-methyl-2-oxopentanoate. The product decarboxylates to 4-methyl-2 oxopentanoate. In Blochmanniella floridana, this protein is 3-isopropylmalate dehydrogenase.